A 170-amino-acid chain; its full sequence is Non-specific lipid transfer protein GPI-anchored 5 (170 aa).

An N-terminal signal peptide occupies residues 1 to 24; that stretch reads MKMEMGLVFLTVFMAVMSSTMVSA. 4 disulfides stabilise this stretch: C28–C69, C38–C53, C54–C95, and C67–C105. N-linked (GlcNAc...) asparagine glycosylation is found at N45, N84, N124, and N130. A disordered region spans residues 105-148; the sequence is CNTGGGGGGSTSDSPAESPNSSGPGNGSKTVPVGEGDGPPSSDG. A lipid anchor (GPI-anchor amidated serine) is attached at S146. A propeptide spans 147–170 (removed in mature form); it reads DGSSIKFSFPLIAFFSAVSYMAIF.

The protein belongs to the plant LTP family. In terms of tissue distribution, expressed in seedlings, preferentially in the endodermis of hypocotyls and roots, as well as in anthers, sepals and flower tori.

Its subcellular location is the cell membrane. Functionally, lipid transfer protein involved in seed and ovule maturation and development, probably by regulating the fatty acids homeostasis during suberin and sporopollenin biosynthesis or deposition. Contributes to pre-invasive defense against some non-host powdery mildew pathogens by preventing the penetration of the epidermal cell wall by the fungal agents (e.g. Blumeria graminis f. sp. hordei (Bgh)). This chain is Non-specific lipid transfer protein GPI-anchored 5, found in Arabidopsis thaliana (Mouse-ear cress).